Here is a 54-residue protein sequence, read N- to C-terminus: Conotoxin vc5c (54 aa).

The first 14 residues, 1–14, serve as a signal peptide directing secretion; the sequence is VILLLLIASIPSDA. The propeptide occupies 15–43; it reads VQLKTKDDMPLASFHGNARRTLQMLSNKR. A 4-carboxyglutamate modification is found at Glu-50. The residue at position 51 (Trp-51) is a 6'-bromotryptophan.

The protein belongs to the conotoxin T superfamily. In terms of processing, contains 2 disulfide bonds that can be either 'C1-C3, C2-C4' or 'C1-C4, C2-C3', since these disulfide connectivities have been observed for conotoxins with cysteine framework V (for examples, see AC P0DQQ7 and AC P81755). As to expression, expressed by the venom duct.

Its subcellular location is the secreted. In Conus victoriae (Queen Victoria cone), this protein is Conotoxin vc5c.